The primary structure comprises 166 residues: Interferon gamma-related (166 aa).

Residues 1–26 (MYCRLNMVYLICALLLIVSLQGTVGA) form the signal peptide. An N-linked (GlcNAc...) asparagine glycan is attached at asparagine 91.

This sequence belongs to the type II (or gamma) interferon family. In terms of assembly, homodimer. As to expression, strongly expressed in spleen. Also detected at lower levels in gill, kidney, heart, brain and intestine. In immune cell populations, expressed at highest levels in peripheral blood leukocytes and at lower levels in splenocytes, granulocytes, monocytes and macrophages.

It is found in the secreted. Cytokine which binds to interferon gamma receptor 1 (ifngr1). Has activating effects on primary macrophages. Induces nitric oxide production and phagocytic responses in macrophages. Primes monocytes for production of reactive oxygen intermediates (ROI), although the effect is short-lived. Also has inhibitory effects on monocyte priming by ifng1 (interferon gamma 1) and tnfb (TNF-alpha 2). Stimulates phosphorylation of the JAK/STAT signal transducer stat1, but fails to induce stat1 nuclear localization. Promotes increased expression of a number of genes important for macrophage activity, including the interferon regulatory factors irf2 and irf9. This chain is Interferon gamma-related, found in Carassius auratus (Goldfish).